The primary structure comprises 607 residues: UvrABC system protein C (607 aa).

The 78-residue stretch at 29–106 folds into the GIY-YIG domain; sequence DKPGVYLMKD…IKKHNPKYNI (78 aa). A UVR domain is found at 211 to 246; the sequence is GAILKALEKKMKEASENLEFERAKEYRDLMEDLKKV.

The protein belongs to the UvrC family. Interacts with UvrB in an incision complex.

The protein localises to the cytoplasm. Functionally, the UvrABC repair system catalyzes the recognition and processing of DNA lesions. UvrC both incises the 5' and 3' sides of the lesion. The N-terminal half is responsible for the 3' incision and the C-terminal half is responsible for the 5' incision. The sequence is that of UvrABC system protein C from Desulfitobacterium hafniense (strain Y51).